We begin with the raw amino-acid sequence, 292 residues long: F-box only protein 16 (292 aa).

The F-box domain maps to 86 to 132 (LDFTTKLPRVLSLYIFSFLDPRSLCRCAQVCWHWKNLAELDQLWMLK). Disordered stretches follow at residues 188–224 (SPEEKQSPLSAFRSSSSLRKKNNSGEKALPPWRSSDK) and 238–292 (RDPM…PLCP). Positions 194–204 (SPLSAFRSSSS) are enriched in low complexity. The segment covering 260 to 273 (RQSHDKKNKLQDRT) has biased composition (basic and acidic residues).

Part of a SCF (SKP1-cullin-F-box) protein ligase complex. In terms of tissue distribution, expressed in heart, spleen and colon.

Probably recognizes and binds to some phosphorylated proteins and promotes their ubiquitination and degradation. The polypeptide is F-box only protein 16 (FBXO16) (Homo sapiens (Human)).